The following is a 188-amino-acid chain: Probable nicotinate-nucleotide adenylyltransferase (188 aa).

The protein belongs to the NadD family.

The catalysed reaction is nicotinate beta-D-ribonucleotide + ATP + H(+) = deamido-NAD(+) + diphosphate. It participates in cofactor biosynthesis; NAD(+) biosynthesis; deamido-NAD(+) from nicotinate D-ribonucleotide: step 1/1. In terms of biological role, catalyzes the reversible adenylation of nicotinate mononucleotide (NaMN) to nicotinic acid adenine dinucleotide (NaAD). In Acholeplasma laidlawii (strain PG-8A), this protein is Probable nicotinate-nucleotide adenylyltransferase.